A 504-amino-acid chain; its full sequence is Arabinose import ATP-binding protein AraG (504 aa).

ABC transporter domains are found at residues leucine 8–arginine 243 and tyrosine 256–valine 499. Glycine 40–serine 47 lines the ATP pocket.

This sequence belongs to the ABC transporter superfamily. Arabinose importer (TC 3.A.1.2.2) family. In terms of assembly, the complex is composed of two ATP-binding proteins (AraG), two transmembrane proteins (AraH) and a solute-binding protein (AraF).

The protein localises to the cell inner membrane. It carries out the reaction L-arabinose(out) + ATP + H2O = L-arabinose(in) + ADP + phosphate + H(+). Its function is as follows. Part of the ABC transporter complex AraFGH involved in arabinose import. Responsible for energy coupling to the transport system. The polypeptide is Arabinose import ATP-binding protein AraG (Shigella boydii serotype 4 (strain Sb227)).